The sequence spans 234 residues: MEFSPPLQRATLIQRYKRFLADVITPDGRELTLHCPNTGAMTGCATRGDTVWYSTSDNTKRKYPHTWELTQSQSGAFICVNTLWANRLTKEAILNESISELSGYSSLKSEVKYGAERSRIDFMLQADSRPDCYIEVKSVTLAENEQGYFPDAVTERGQKHLRELMNVAAEGQRAVIFFAVLHSAITRFSPARHIDEKYAQLLSEAQQRGVEILAYKAEISAEGMALKKSLSVTL.

The segment at residues 201–220 (LLSEAQQRGVEILAYKAEIS) is a DNA-binding region (H-T-H motif).

It belongs to the SfsA family.

Its function is as follows. Binds to DNA non-specifically. Could be a regulatory factor involved in maltose metabolism. The polypeptide is Sugar fermentation stimulation protein A (Shigella sonnei (strain Ss046)).